We begin with the raw amino-acid sequence, 73 residues long: Large ribosomal subunit protein bL31 (73 aa).

It belongs to the bacterial ribosomal protein bL31 family. Type A subfamily. In terms of assembly, part of the 50S ribosomal subunit.

Functionally, binds the 23S rRNA. This chain is Large ribosomal subunit protein bL31, found in Rhizobium meliloti (strain 1021) (Ensifer meliloti).